The sequence spans 278 residues: Elongation factor Ts (278 aa).

The interval 80-83 is involved in Mg(2+) ion dislocation from EF-Tu; sequence TDFV.

This sequence belongs to the EF-Ts family.

The protein localises to the cytoplasm. Its function is as follows. Associates with the EF-Tu.GDP complex and induces the exchange of GDP to GTP. It remains bound to the aminoacyl-tRNA.EF-Tu.GTP complex up to the GTP hydrolysis stage on the ribosome. The sequence is that of Elongation factor Ts from Arthrobacter sp. (strain FB24).